Here is a 362-residue protein sequence, read N- to C-terminus: Atypical chemokine receptor 3 (362 aa).

The Extracellular segment spans residues 1–47; it reads MDVHLFDYAEPGNYSDINWPCNSSDCIVVDTVQCPTMPNKNVLLYTL. 2 N-linked (GlcNAc...) asparagine glycosylation sites follow: Asn-13 and Asn-22. The chain crosses the membrane as a helical span at residues 48–68; sequence SFIYIFIFVIGMIANSVVVWV. The Cytoplasmic portion of the chain corresponds to 69–81; that stretch reads NIQAKTTGYDTHC. The helical transmembrane segment at 82–102 threads the bilayer; sequence YILNLAIADLWVVITIPVWVV. Over 103–118 the chain is Extracellular; the sequence is SLVQHNQWPMGELTCK. Cys-117 and Cys-196 are joined by a disulfide. A helical transmembrane segment spans residues 119 to 139; that stretch reads ITHLIFSINLFGSIFFLACMS. Residues 140-162 are Cytoplasmic-facing; that stretch reads VDRYLSITYFTGTSSYKKKMVRR. The helical transmembrane segment at 163–183 threads the bilayer; sequence VVCILVWLLAFFVSLPDTYYL. Residues 184–213 are Extracellular-facing; that stretch reads KTVTSASNNETYCRSFYPEHSIKEWLIGME. The chain crosses the membrane as a helical span at residues 214–234; the sequence is LVSVILGFAVPFTIIAIFYFL. The Cytoplasmic segment spans residues 235 to 252; that stretch reads LARAMSASGDQEKHSSRK. The helical transmembrane segment at 253–273 threads the bilayer; the sequence is IIFSYVVVFLVCWLPYHFVVL. Residues 274–296 lie on the Extracellular side of the membrane; it reads LDIFSILHYIPFTCQLENVLFTA. The helical transmembrane segment at 297-319 threads the bilayer; it reads LHVTQCLSLVHCCVNPVLYSFIN. Residues 320–362 lie on the Cytoplasmic side of the membrane; it reads RNYRYELMKAFIFKYSAKTGLTKLIDASRVSETEYSALEQNTK. Residues 324–362 form a C-terminal cytoplasmic tail region; it reads YELMKAFIFKYSAKTGLTKLIDASRVSETEYSALEQNTK. Phosphoserine occurs at positions 347, 350, and 355.

Belongs to the G-protein coupled receptor 1 family. Atypical chemokine receptor subfamily. In terms of assembly, homodimer. Can form heterodimers with CXCR4; heterodimerization may regulate CXCR4 signaling activity. Interacts with ARRB1 and ARRB2. In terms of processing, the Ser/Thr residues in the C-terminal cytoplasmic tail may be phosphorylated. Post-translationally, ubiquitinated at the Lys residues in its C-terminal cytoplasmic tail and is essential for correct trafficking from and to the cell membrane. Deubiquitinated by CXCL12-stimulation in a reversible manner. In terms of tissue distribution, not detected in blood, liver, lung and heart, but high expression detected in several tumor cell lines (at protein level). Expressed in heart, spleen, kidney, lung, ovary, brain, testis, astrocytes, neutrophils and B-lymphocytes.

The protein resides in the cell membrane. It localises to the early endosome. The protein localises to the recycling endosome. Its function is as follows. Atypical chemokine receptor that controls chemokine levels and localization via high-affinity chemokine binding that is uncoupled from classic ligand-driven signal transduction cascades, resulting instead in chemokine sequestration, degradation, or transcytosis. Also known as interceptor (internalizing receptor) or chemokine-scavenging receptor or chemokine decoy receptor. Acts as a receptor for chemokines CXCL11 and CXCL12/SDF1. Chemokine binding does not activate G-protein-mediated signal transduction but instead induces beta-arrestin recruitment, leading to ligand internalization and activation of MAPK signaling pathway. Required for regulation of CXCR4 protein levels in migrating interneurons, thereby adapting their chemokine responsiveness. In glioma cells, transduces signals via MEK/ERK pathway, mediating resistance to apoptosis. Promotes cell growth and survival. Not involved in cell migration, adhesion or proliferation of normal hematopoietic progenitors but activated by CXCL11 in malignant hemapoietic cells, leading to phosphorylation of ERK1/2 (MAPK3/MAPK1) and enhanced cell adhesion and migration. Plays a regulatory role in CXCR4-mediated activation of cell surface integrins by CXCL12. Required for heart valve development. Regulates axon guidance in the oculomotor system through the regulation of CXCL12 levels. The sequence is that of Atypical chemokine receptor 3 from Mus musculus (Mouse).